Here is a 253-residue protein sequence, read N- to C-terminus: MTTIDLNCDLGESFGAYKMGNDDEILPFVSSINVACGFHAGDPSIMRQTVEKALEHNVAIGAHPGFPDLIGFGRRNMNVSASEVYDYVLYQTGALDAFVKAAGGKMQHVKPHGALYNMAASNPEIADAIAKAIYHINPSLLLYGLANSEAFIQAAEKYKVTLVQEAFADRTYKQDGTLTSRTEENALIKDEDEAIKQVLQMVKEGYVNSVNGEKVAVQAQTICLHGDGEKAVQFAERIYRTFKLNGISICAPK.

It belongs to the LamB/PxpA family. In terms of assembly, forms a complex composed of PxpA, PxpB and PxpC.

The enzyme catalyses 5-oxo-L-proline + ATP + 2 H2O = L-glutamate + ADP + phosphate + H(+). Catalyzes the cleavage of 5-oxoproline to form L-glutamate coupled to the hydrolysis of ATP to ADP and inorganic phosphate. This chain is 5-oxoprolinase subunit A, found in Bacillus cereus (strain ATCC 14579 / DSM 31 / CCUG 7414 / JCM 2152 / NBRC 15305 / NCIMB 9373 / NCTC 2599 / NRRL B-3711).